Here is a 205-residue protein sequence, read N- to C-terminus: Peptidyl-tRNA hydrolase (205 aa).

Tyr17 contributes to the tRNA binding site. Residue His22 is the Proton acceptor of the active site. Positions 73 and 75 each coordinate tRNA.

Belongs to the PTH family. In terms of assembly, monomer.

The protein resides in the cytoplasm. It catalyses the reaction an N-acyl-L-alpha-aminoacyl-tRNA + H2O = an N-acyl-L-amino acid + a tRNA + H(+). Its function is as follows. Hydrolyzes ribosome-free peptidyl-tRNAs (with 1 or more amino acids incorporated), which drop off the ribosome during protein synthesis, or as a result of ribosome stalling. In terms of biological role, catalyzes the release of premature peptidyl moieties from peptidyl-tRNA molecules trapped in stalled 50S ribosomal subunits, and thus maintains levels of free tRNAs and 50S ribosomes. This Maridesulfovibrio salexigens (strain ATCC 14822 / DSM 2638 / NCIMB 8403 / VKM B-1763) (Desulfovibrio salexigens) protein is Peptidyl-tRNA hydrolase.